Consider the following 273-residue polypeptide: Proteasome subunit beta type-10 (273 aa).

N-acetylmethionine is present on methionine 1. Positions 1 to 39 (MQKTVLEPQRGFSFENCERNAALQRALPGLRVPHARKTG) are cleaved as a propeptide — removed in mature form. The Nucleophile role is filled by threonine 40. A Phosphoserine modification is found at serine 230.

Belongs to the peptidase T1B family. As to quaternary structure, the 26S proteasome consists of a 20S proteasome core and two 19S regulatory subunits. The 20S proteasome core is composed of 28 subunits that are arranged in four stacked rings, resulting in a barrel-shaped structure. The two end rings are each formed by seven alpha subunits, and the two central rings are each formed by seven beta subunits. The catalytic chamber with the active sites is on the inside of the barrel. Component of the immunoproteasome, where it displaces the equivalent housekeeping subunit PSMB7. Component of the spermatoproteasome, a form of the proteasome specifically found in testis. Autocleaved. The resulting N-terminal Thr residue of the mature subunit is responsible for the nucleophile proteolytic activity.

It is found in the cytoplasm. The protein resides in the nucleus. It catalyses the reaction Cleavage of peptide bonds with very broad specificity.. Its function is as follows. The proteasome is a multicatalytic proteinase complex which is characterized by its ability to cleave peptides with Arg, Phe, Tyr, Leu, and Glu adjacent to the leaving group at neutral or slightly basic pH. The proteasome has an ATP-dependent proteolytic activity. This subunit is involved in antigen processing to generate class I binding peptides. This is Proteasome subunit beta type-10 (PSMB10) from Bos taurus (Bovine).